Consider the following 435-residue polypeptide: Serine/threonine-protein kinase 40 (435 aa).

The segment covering 1-10 has biased composition (basic and acidic residues); the sequence is MKRRASDRGA. The interval 1–25 is disordered; sequence MKRRASDRGAGETSARAKALGSGIS. The Protein kinase domain occupies 35 to 332; sequence FILGPRLGNS…DVLEALSAII (298 aa). ATP-binding positions include 41 to 49 and Lys66; that span reads LGNSPVPSI. Residue Asp197 is the Proton acceptor of the active site.

It belongs to the protein kinase superfamily. CAMK Ser/Thr protein kinase family.

Its subcellular location is the nucleus. The protein resides in the cytoplasm. It carries out the reaction L-seryl-[protein] + ATP = O-phospho-L-seryl-[protein] + ADP + H(+). It catalyses the reaction L-threonyl-[protein] + ATP = O-phospho-L-threonyl-[protein] + ADP + H(+). In terms of biological role, may be a negative regulator of NF-kappa-B and p53-mediated gene transcription. The chain is Serine/threonine-protein kinase 40 (STK40) from Pongo abelii (Sumatran orangutan).